A 256-amino-acid polypeptide reads, in one-letter code: Global transcriptional regulator CodY (256 aa).

Positions 1–155 are GAF domain; sequence MSLLSKTREL…AATVIGMEIL (155 aa). Residues 203–222 constitute a DNA-binding region (H-T-H motif); it reads ASKVADRVGITRSVIVNALR.

The protein belongs to the CodY family.

The protein localises to the cytoplasm. In terms of biological role, DNA-binding global transcriptional regulator which is involved in the adaptive response to starvation and acts by directly or indirectly controlling the expression of numerous genes in response to nutrient availability. During rapid exponential growth, CodY is highly active and represses genes whose products allow adaptation to nutrient depletion. In Staphylococcus epidermidis (strain ATCC 35984 / DSM 28319 / BCRC 17069 / CCUG 31568 / BM 3577 / RP62A), this protein is Global transcriptional regulator CodY.